The chain runs to 319 residues: MATVQFFNQFPCKTRVQSSANSKPLSKPPSSLVPMSALTRRPSFPPGEFAVSRSDFRVRVIDAEDELDPETSEGGGSALLMAEEAIESVEETEVLKRSLVDSLYGTDRGLSASSETRAEIGDLITQLESKNPTPAPTDALFLLNGKWILAYTSFVGLFPLLSRGIVPLVKVDEISQTIDSDNFTVENSVLFAGPLATTSISTNAKFEIRSPKRVQIKFEEGVIGTPQLTDSIEIPEYVEFLGQKIDLTPIRGLLTSVQDTATSVARTISSQPPLKFSLPGDSAQSWLLTTYLDKDIRISRGDGGSVFVLIKEGSPLLNP.

A chloroplast-targeting transit peptide spans methionine 1–arginine 59. Positions glutamine 17–threonine 39 are disordered. A compositionally biased stretch (low complexity) spans serine 18–serine 36.

It belongs to the PAP/fibrillin family. As to expression, expressed almost exclusively in petals. Very weak expression in all other organs.

The protein localises to the plastid. It is found in the chloroplast. Functionally, may stabilize the accumulated carotenoid structures. This chain is Plastid lipid-associated protein 2, chloroplastic (PAP2), found in Brassica campestris (Field mustard).